Consider the following 474-residue polypeptide: Probable multidrug resistance protein NorM (474 aa).

12 consecutive transmembrane segments (helical) span residues 33–50 (LWLA…IAMM), 65–87 (VAAA…GLVS), 108–130 (SLRV…QLYG), 150–172 (YLDG…GLMG), 179–201 (PALW…LIHG), 211–233 (FGAG…VVCV), 258–280 (LLQL…GAAA), 295–317 (QIAL…AATV), 334–356 (AGFA…VALT), 376–398 (TLTA…QVVA), 410–432 (VPLL…VLGF), and 436–458 (LGPF…LLVW).

This sequence belongs to the multi antimicrobial extrusion (MATE) (TC 2.A.66.1) family.

It localises to the cell inner membrane. Multidrug efflux pump. The polypeptide is Probable multidrug resistance protein NorM (norM) (Rhodopseudomonas palustris (strain ATCC BAA-98 / CGA009)).